The sequence spans 125 residues: Holo-[acyl-carrier-protein] synthase (125 aa).

Mg(2+)-binding residues include Asp8 and Glu57.

The protein belongs to the P-Pant transferase superfamily. AcpS family. It depends on Mg(2+) as a cofactor.

The protein localises to the cytoplasm. The enzyme catalyses apo-[ACP] + CoA = holo-[ACP] + adenosine 3',5'-bisphosphate + H(+). Transfers the 4'-phosphopantetheine moiety from coenzyme A to a Ser of acyl-carrier-protein. The sequence is that of Holo-[acyl-carrier-protein] synthase from Nitrosomonas eutropha (strain DSM 101675 / C91 / Nm57).